A 221-amino-acid polypeptide reads, in one-letter code: Small ribosomal subunit protein eS1 (221 aa).

Belongs to the eukaryotic ribosomal protein eS1 family.

The polypeptide is Small ribosomal subunit protein eS1 (Pyrobaculum aerophilum (strain ATCC 51768 / DSM 7523 / JCM 9630 / CIP 104966 / NBRC 100827 / IM2)).